The sequence spans 651 residues: Probable potassium transport system protein Kup (651 aa).

12 helical membrane passes run 41–61, 82–102, 130–150, 163–183, 194–214, 235–255, 276–296, 309–329, 366–386, 395–415, 426–446, and 450–470; these read LVLG…IYAF, VVSL…VLFV, LILG…VITP, IVAP…LVTL, VAIV…ASGL, FLTV…LAMT, WLWI…AFIL, MIPS…TVIA, IYIP…VLGF, AYGI…YIAM, ALPI…ANII, and EGGW…WTWV.

Belongs to the HAK/KUP transporter (TC 2.A.72) family.

It is found in the cell inner membrane. The enzyme catalyses K(+)(in) + H(+)(in) = K(+)(out) + H(+)(out). Transport of potassium into the cell. Likely operates as a K(+):H(+) symporter. This is Probable potassium transport system protein Kup from Brucella abortus (strain S19).